We begin with the raw amino-acid sequence, 444 residues long: Glutamyl-tRNA reductase (444 aa).

Substrate contacts are provided by residues 49-52 (TCNR), S117, 122-124 (EPQ), and Q128. The active-site Nucleophile is the C50. 202-207 (GAGETI) is an NADP(+) binding site.

It belongs to the glutamyl-tRNA reductase family. As to quaternary structure, homodimer.

It carries out the reaction (S)-4-amino-5-oxopentanoate + tRNA(Glu) + NADP(+) = L-glutamyl-tRNA(Glu) + NADPH + H(+). The protein operates within porphyrin-containing compound metabolism; protoporphyrin-IX biosynthesis; 5-aminolevulinate from L-glutamyl-tRNA(Glu): step 1/2. In terms of biological role, catalyzes the NADPH-dependent reduction of glutamyl-tRNA(Glu) to glutamate 1-semialdehyde (GSA). The polypeptide is Glutamyl-tRNA reductase (Mannheimia succiniciproducens (strain KCTC 0769BP / MBEL55E)).